Reading from the N-terminus, the 433-residue chain is MRAEARGGLERFCSAGKGRGLRALRPFHVGDLLFSCPAYACVLTVGERGHHCECCFARKEGLSKCGRCKQAFYCDVECQKEDWPLHKLECSSMVVFGENWNPSETVRLTARILAKQKMHPERTPSEKLLAVREFESHLDKLDNEKKDLIQSDIAALHQFYSKHLEFPDHSSLVVLFAQVNCNGFTIEDEELSHLGSAIFPDVALMNHSCCPNVIVTYKGTLAEVRAVQEIHPGDEVFTSYIDLLYPTEDRNDRLRDSYFFTCECRECTTKDKDKAKVEIRKLSNPPQAEAIRDMVRYARNVIEEFRRAKHYKSPSELLEICELSQEKMSSVFEDSNVYMLHMMYQAMGVCLYMQDWEGALKYGQKIIKPYSKHYPVYSLNVASMWLKLGRLYMGLENKAAGEKALKKAIAIMEIAHGKDHPYISEIKQEIESH.

Residues 7 to 241 (GGLERFCSAG…PGDEVFTSYI (235 aa)) form the SET domain. 17 to 19 (KGR) is a binding site for S-adenosyl-L-methionine. Positions 52, 55, 65, 68, 74, 78, 86, and 90 each coordinate Zn(2+). The MYND-type zinc finger occupies 52 to 90 (CECCFARKEGLSKCGRCKQAFYCDVECQKEDWPLHKLEC). Residues histidine 137, 206–207 (NH), and 258–260 (YFF) contribute to the S-adenosyl-L-methionine site. Serine 283 carries the post-translational modification Phosphoserine.

The protein belongs to the class V-like SAM-binding methyltransferase superfamily. As to quaternary structure, interacts with RNA polymerase II and HELZ. Interacts with SIN3A and HDAC1. Interacts (via MYND-type zinc finger) with EPB41L3. Interacts (via SET domain) with p53/TP53. Interacts with RB1 and HSP90AA1.

Its subcellular location is the cytoplasm. It is found in the cytosol. It localises to the nucleus. It catalyses the reaction L-lysyl(4)-[histone H3] + 3 S-adenosyl-L-methionine = N(6),N(6),N(6)-trimethyl-L-lysyl(4)-[histone H3] + 3 S-adenosyl-L-homocysteine + 3 H(+). The catalysed reaction is L-lysyl-[protein] + S-adenosyl-L-methionine = N(6)-methyl-L-lysyl-[protein] + S-adenosyl-L-homocysteine + H(+). Functionally, protein-lysine N-methyltransferase that methylates both histones and non-histone proteins, including p53/TP53 and RB1. Specifically trimethylates histone H3 'Lys-4' (H3K4me3) in vivo. The activity requires interaction with HSP90alpha. Shows even higher methyltransferase activity on p53/TP53. Monomethylates 'Lys-370' of p53/TP53, leading to decreased DNA-binding activity and subsequent transcriptional regulation activity of p53/TP53. Monomethylates RB1 at 'Lys-860'. The protein is N-lysine methyltransferase SMYD2 (Smyd2) of Rattus norvegicus (Rat).